Reading from the N-terminus, the 234-residue chain is Ubiquinone biosynthesis O-methyltransferase (234 aa).

S-adenosyl-L-methionine-binding residues include Arg37, Gly56, Asp77, and Met121.

The protein belongs to the methyltransferase superfamily. UbiG/COQ3 family.

It catalyses the reaction a 3-demethylubiquinol + S-adenosyl-L-methionine = a ubiquinol + S-adenosyl-L-homocysteine + H(+). The catalysed reaction is a 3-(all-trans-polyprenyl)benzene-1,2-diol + S-adenosyl-L-methionine = a 2-methoxy-6-(all-trans-polyprenyl)phenol + S-adenosyl-L-homocysteine + H(+). The protein operates within cofactor biosynthesis; ubiquinone biosynthesis. Functionally, O-methyltransferase that catalyzes the 2 O-methylation steps in the ubiquinone biosynthetic pathway. This is Ubiquinone biosynthesis O-methyltransferase from Aromatoleum aromaticum (strain DSM 19018 / LMG 30748 / EbN1) (Azoarcus sp. (strain EbN1)).